A 388-amino-acid chain; its full sequence is tRNA (guanine(26)-N(2))-dimethyltransferase (388 aa).

The 380-residue stretch at 4 to 383 folds into the Trm1 methyltransferase domain; sequence RTIVEGTTKI…APIAEIKKII (380 aa). S-adenosyl-L-methionine-binding residues include R41, R78, D94, and A123. C251, C254, C271, and C274 together coordinate Zn(2+).

The protein belongs to the class I-like SAM-binding methyltransferase superfamily. Trm1 family.

It catalyses the reaction guanosine(26) in tRNA + 2 S-adenosyl-L-methionine = N(2)-dimethylguanosine(26) in tRNA + 2 S-adenosyl-L-homocysteine + 2 H(+). Dimethylates a single guanine residue at position 26 of a number of tRNAs using S-adenosyl-L-methionine as donor of the methyl groups. The polypeptide is tRNA (guanine(26)-N(2))-dimethyltransferase (Methanosarcina acetivorans (strain ATCC 35395 / DSM 2834 / JCM 12185 / C2A)).